Reading from the N-terminus, the 349-residue chain is Protein Wnt-7a (349 aa).

The signal sequence occupies residues 1 to 31 (MNRKARRCLGHLFLSLGMVYLRIGGFSTVVA). 5 disulfides stabilise this stretch: Cys73–Cys84, Cys123–Cys131, Cys133–Cys152, Cys200–Cys214, and Cys202–Cys209. Residues Asn83 and Asn127 are each glycosylated (N-linked (GlcNAc...) asparagine). The O-palmitoleoyl serine; by PORCN moiety is linked to residue Ser206. The segment at 238–266 (VEPVRASRNKRPTFLKIKKPLSYRKPMDT) is disordered linker. Intrachain disulfides connect Cys278/Cys309, Cys294/Cys304, Cys308/Cys348, Cys324/Cys339, Cys326/Cys336, and Cys331/Cys332. Residue Asn295 is glycosylated (N-linked (GlcNAc...) asparagine).

The protein belongs to the Wnt family. As to quaternary structure, forms a soluble 1:1 complex with AFM; this prevents oligomerization and is required for prolonged biological activity. The complex with AFM may represent the physiological form in body fluids. Interacts with PORCN. Interacts (via intrinsically disordered linker region) with RECK; interaction with RECK confers ligand selectivity for Wnt7 in brain endothelial cells and allows these cells to selectively respond to Wnt7. Interacts with FZD5. Palmitoleoylation is required for efficient binding to frizzled receptors. Depalmitoleoylation leads to Wnt signaling pathway inhibition.

It is found in the secreted. The protein localises to the extracellular space. Its subcellular location is the extracellular matrix. Ligand for members of the frizzled family of seven transmembrane receptors that functions in the canonical Wnt/beta-catenin signaling pathway. Plays an important role in embryonic development, including dorsal versus ventral patterning during limb development, skeleton development and urogenital tract development. Required for central nervous system (CNS) angiogenesis and blood-brain barrier regulation. Required for normal, sexually dimorphic development of the Mullerian ducts, and for normal fertility in both sexes. Required for normal neural stem cell proliferation in the hippocampus dentate gyrus. Required for normal progress through the cell cycle in neural progenitor cells, for self-renewal of neural stem cells, and for normal neuronal differentiation and maturation. Promotes formation of synapses via its interaction with FZD5. The chain is Protein Wnt-7a (WNT7A) from Chlorocebus aethiops (Green monkey).